Reading from the N-terminus, the 165-residue chain is Nucleotide-binding protein P9211_04811 (165 aa).

Belongs to the YajQ family.

Functionally, nucleotide-binding protein. The protein is Nucleotide-binding protein P9211_04811 of Prochlorococcus marinus (strain MIT 9211).